The sequence spans 660 residues: Methionine--tRNA ligase 1 (660 aa).

The short motif at 15 to 25 is the 'HIGH' region element; sequence YYPSGKLHIGH. The 'KMSKS' region signature appears at 310 to 314; it reads KMSKS. Lys313 is a binding site for ATP. The tRNA-binding domain occupies 560 to 660; the sequence is DFFKVELRVA…QNLPNGTKIK (101 aa).

This sequence belongs to the class-I aminoacyl-tRNA synthetase family. MetG type 2B subfamily. Homodimer.

The protein resides in the cytoplasm. It carries out the reaction tRNA(Met) + L-methionine + ATP = L-methionyl-tRNA(Met) + AMP + diphosphate. In terms of biological role, is required not only for elongation of protein synthesis but also for the initiation of all mRNA translation through initiator tRNA(fMet) aminoacylation. The protein is Methionine--tRNA ligase 1 of Bacillus cereus (strain ATCC 14579 / DSM 31 / CCUG 7414 / JCM 2152 / NBRC 15305 / NCIMB 9373 / NCTC 2599 / NRRL B-3711).